The chain runs to 187 residues: Elongation factor P (187 aa).

This sequence belongs to the elongation factor P family.

The protein localises to the cytoplasm. Its pathway is protein biosynthesis; polypeptide chain elongation. Involved in peptide bond synthesis. Stimulates efficient translation and peptide-bond synthesis on native or reconstituted 70S ribosomes in vitro. Probably functions indirectly by altering the affinity of the ribosome for aminoacyl-tRNA, thus increasing their reactivity as acceptors for peptidyl transferase. This is Elongation factor P from Desulfatibacillum aliphaticivorans.